The sequence spans 449 residues: Glucose-6-phosphate isomerase (449 aa).

E291 acts as the Proton donor in catalysis. Catalysis depends on residues H312 and K426.

Belongs to the GPI family.

It is found in the cytoplasm. It catalyses the reaction alpha-D-glucose 6-phosphate = beta-D-fructose 6-phosphate. The protein operates within carbohydrate biosynthesis; gluconeogenesis. Its pathway is carbohydrate degradation; glycolysis; D-glyceraldehyde 3-phosphate and glycerone phosphate from D-glucose: step 2/4. Catalyzes the reversible isomerization of glucose-6-phosphate to fructose-6-phosphate. The protein is Glucose-6-phosphate isomerase of Streptococcus pyogenes serotype M18 (strain MGAS8232).